A 91-amino-acid chain; its full sequence is Large ribosomal subunit protein uL22 (91 aa).

This sequence belongs to the universal ribosomal protein uL22 family. Part of the 50S ribosomal subunit.

This protein binds specifically to 23S rRNA; its binding is stimulated by other ribosomal proteins, e.g. L4, L17, and L20. It is important during the early stages of 50S assembly. It makes multiple contacts with different domains of the 23S rRNA in the assembled 50S subunit and ribosome. Functionally, the globular domain of the protein is located near the polypeptide exit tunnel on the outside of the subunit, while an extended beta-hairpin is found that lines the wall of the exit tunnel in the center of the 70S ribosome. This is Large ribosomal subunit protein uL22 (rplV) from Loofah witches'-broom phytoplasma.